We begin with the raw amino-acid sequence, 408 residues long: 1-deoxy-D-xylulose 5-phosphate reductoisomerase (408 aa).

Threonine 26, glycine 27, serine 28, isoleucine 29, and asparagine 143 together coordinate NADPH. Lysine 144 provides a ligand contact to 1-deoxy-D-xylulose 5-phosphate. Glutamate 145 is a binding site for NADPH. Residue aspartate 167 coordinates Mn(2+). 1-deoxy-D-xylulose 5-phosphate-binding residues include serine 168, glutamate 169, serine 193, and histidine 216. Glutamate 169 provides a ligand contact to Mn(2+). Glycine 222 contributes to the NADPH binding site. 1-deoxy-D-xylulose 5-phosphate-binding residues include serine 229, asparagine 234, lysine 235, and glutamate 238. Position 238 (glutamate 238) interacts with Mn(2+).

The protein belongs to the DXR family. It depends on Mg(2+) as a cofactor. Mn(2+) serves as cofactor.

The enzyme catalyses 2-C-methyl-D-erythritol 4-phosphate + NADP(+) = 1-deoxy-D-xylulose 5-phosphate + NADPH + H(+). It participates in isoprenoid biosynthesis; isopentenyl diphosphate biosynthesis via DXP pathway; isopentenyl diphosphate from 1-deoxy-D-xylulose 5-phosphate: step 1/6. Functionally, catalyzes the NADPH-dependent rearrangement and reduction of 1-deoxy-D-xylulose-5-phosphate (DXP) to 2-C-methyl-D-erythritol 4-phosphate (MEP). The protein is 1-deoxy-D-xylulose 5-phosphate reductoisomerase of Corynebacterium jeikeium (strain K411).